The chain runs to 384 residues: S-adenosylmethionine synthase (384 aa).

An ATP-binding site is contributed by His15. Asp17 contacts Mg(2+). Glu43 is a K(+) binding site. Glu56 and Gln99 together coordinate L-methionine. The interval Gln99–Arg109 is flexible loop. ATP-binding positions include Asp164–Lys166, Arg230–Phe231, Asp239, Arg245–Lys246, Ala262, and Lys266. Asp239 is a binding site for L-methionine. An L-methionine-binding site is contributed by Lys270.

This sequence belongs to the AdoMet synthase family. In terms of assembly, homotetramer; dimer of dimers. Requires Mg(2+) as cofactor. K(+) is required as a cofactor.

It localises to the cytoplasm. It catalyses the reaction L-methionine + ATP + H2O = S-adenosyl-L-methionine + phosphate + diphosphate. It participates in amino-acid biosynthesis; S-adenosyl-L-methionine biosynthesis; S-adenosyl-L-methionine from L-methionine: step 1/1. Catalyzes the formation of S-adenosylmethionine (AdoMet) from methionine and ATP. The overall synthetic reaction is composed of two sequential steps, AdoMet formation and the subsequent tripolyphosphate hydrolysis which occurs prior to release of AdoMet from the enzyme. The sequence is that of S-adenosylmethionine synthase from Pasteurella multocida (strain Pm70).